Consider the following 401-residue polypeptide: NADH-quinone oxidoreductase subunit D 2 (401 aa).

This sequence belongs to the complex I 49 kDa subunit family. As to quaternary structure, NDH-1 is composed of 14 different subunits. Subunits NuoB, C, D, E, F, and G constitute the peripheral sector of the complex.

It localises to the cell inner membrane. It carries out the reaction a quinone + NADH + 5 H(+)(in) = a quinol + NAD(+) + 4 H(+)(out). In terms of biological role, NDH-1 shuttles electrons from NADH, via FMN and iron-sulfur (Fe-S) centers, to quinones in the respiratory chain. The immediate electron acceptor for the enzyme in this species is believed to be ubiquinone. Couples the redox reaction to proton translocation (for every two electrons transferred, four hydrogen ions are translocated across the cytoplasmic membrane), and thus conserves the redox energy in a proton gradient. The polypeptide is NADH-quinone oxidoreductase subunit D 2 (Thermodesulfovibrio yellowstonii (strain ATCC 51303 / DSM 11347 / YP87)).